The sequence spans 535 residues: Cytochrome P450 monooxygenase atE (535 aa).

Cysteine 455 contacts heme.

The protein belongs to the cytochrome P450 family. Requires heme as cofactor.

The catalysed reaction is 3-methylcatechol + AH2 + O2 = 3-methylbenzene-1,2,4-triol + A + H2O. Its pathway is secondary metabolite biosynthesis. Functionally, cytochrome P450 monooxygenase; part of the gene cluster that mediates the biosynthesis of terreic acid, a quinone epoxide inhibitor of Bruton's tyrosine kinase. The first step of the pathway is the synthesis of 6-methylsalicylic acid (6-MSA) by the 6-methylsalicylic acid synthase atX. In the biosynthesis of 6-MSA, atX utilizes one acetyl-CoA and three malonyl-CoAs as its substrates and catalyzes a series of programmed reactions including Claisen condensation, reduction, aldol cyclization, and the hydrolytic cleavage that yields 6-MSA. The 6-methylsalicylate 1-monooxygenase atA then catalyzes the decarboxylative hydroxylation of 6-MSA to 3-methylcatechol. The next step is the conversion of 3-methylcatechol to 3-methyl-1,2,4-benzenetriol by cytochrome P450 monooxygenase atE, which is enhanced by cytochrome P450 monooxygenase atG. Then, the epoxidase atD catalyzes the epoxidation and hydroxyl oxidation of 3-methyl-1,2,4-benzenetriol to terremutin. Lastly, GMC oxidoreductase atC oxidizes terremutin to terreic acid. In Aspergillus terreus (strain NIH 2624 / FGSC A1156), this protein is Cytochrome P450 monooxygenase atE.